The primary structure comprises 186 residues: Large ribosomal subunit protein uL5 (186 aa).

It belongs to the universal ribosomal protein uL5 family. As to quaternary structure, part of the 50S ribosomal subunit; part of the 5S rRNA/L5/L18/L25 subcomplex. Contacts the 5S rRNA and the P site tRNA. Forms a bridge to the 30S subunit in the 70S ribosome.

Functionally, this is one of the proteins that bind and probably mediate the attachment of the 5S RNA into the large ribosomal subunit, where it forms part of the central protuberance. In the 70S ribosome it contacts protein S13 of the 30S subunit (bridge B1b), connecting the 2 subunits; this bridge is implicated in subunit movement. Contacts the P site tRNA; the 5S rRNA and some of its associated proteins might help stabilize positioning of ribosome-bound tRNAs. In Legionella pneumophila subsp. pneumophila (strain Philadelphia 1 / ATCC 33152 / DSM 7513), this protein is Large ribosomal subunit protein uL5.